Reading from the N-terminus, the 98-residue chain is Cell division topological specificity factor (98 aa).

It belongs to the MinE family.

Prevents the cell division inhibition by proteins MinC and MinD at internal division sites while permitting inhibition at polar sites. This ensures cell division at the proper site by restricting the formation of a division septum at the midpoint of the long axis of the cell. In Methylorubrum populi (strain ATCC BAA-705 / NCIMB 13946 / BJ001) (Methylobacterium populi), this protein is Cell division topological specificity factor.